The primary structure comprises 55 residues: Large ribosomal subunit protein bL33 (55 aa).

Belongs to the bacterial ribosomal protein bL33 family.

The protein is Large ribosomal subunit protein bL33 of Paraburkholderia phytofirmans (strain DSM 17436 / LMG 22146 / PsJN) (Burkholderia phytofirmans).